A 386-amino-acid polypeptide reads, in one-letter code: Bifunctional enzyme IspD/IspF (386 aa).

A 2-C-methyl-D-erythritol 4-phosphate cytidylyltransferase region spans residues 1–229; sequence MIRGERVIGI…RARALLEAPV (229 aa). Positions 230–386 are 2-C-methyl-D-erythritol 2,4-cyclodiphosphate synthase; sequence ATGVGYDTHR…AIALLVRAAG (157 aa). A divalent metal cation contacts are provided by D236 and H238. Residues 236–238 and 261–262 each bind 4-CDP-2-C-methyl-D-erythritol 2-phosphate; these read DTH and HS. H269 contacts a divalent metal cation. 4-CDP-2-C-methyl-D-erythritol 2-phosphate is bound by residues 283–285, 288–292, 359–362, F366, and R369; these read DLG, FPDTD, and TTGE.

This sequence in the N-terminal section; belongs to the IspD/TarI cytidylyltransferase family. IspD subfamily. In the C-terminal section; belongs to the IspF family. A divalent metal cation is required as a cofactor.

It catalyses the reaction 2-C-methyl-D-erythritol 4-phosphate + CTP + H(+) = 4-CDP-2-C-methyl-D-erythritol + diphosphate. It carries out the reaction 4-CDP-2-C-methyl-D-erythritol 2-phosphate = 2-C-methyl-D-erythritol 2,4-cyclic diphosphate + CMP. Its pathway is isoprenoid biosynthesis; isopentenyl diphosphate biosynthesis via DXP pathway; isopentenyl diphosphate from 1-deoxy-D-xylulose 5-phosphate: step 2/6. The protein operates within isoprenoid biosynthesis; isopentenyl diphosphate biosynthesis via DXP pathway; isopentenyl diphosphate from 1-deoxy-D-xylulose 5-phosphate: step 4/6. Functionally, bifunctional enzyme that catalyzes the formation of 4-diphosphocytidyl-2-C-methyl-D-erythritol from CTP and 2-C-methyl-D-erythritol 4-phosphate (MEP) (IspD), and catalyzes the conversion of 4-diphosphocytidyl-2-C-methyl-D-erythritol 2-phosphate (CDP-ME2P) to 2-C-methyl-D-erythritol 2,4-cyclodiphosphate (ME-CPP) with a corresponding release of cytidine 5-monophosphate (CMP) (IspF). The sequence is that of Bifunctional enzyme IspD/IspF from Anaeromyxobacter dehalogenans (strain 2CP-C).